Consider the following 275-residue polypeptide: Undecaprenyl-diphosphatase 2 (275 aa).

Helical transmembrane passes span Asn48–Phe68, Gly90–Phe110, Ile117–Ala137, Ile154–Phe174, Ala195–Ile215, Ile223–Val243, and Ile254–Phe274.

The protein belongs to the UppP family.

The protein resides in the cell membrane. It catalyses the reaction di-trans,octa-cis-undecaprenyl diphosphate + H2O = di-trans,octa-cis-undecaprenyl phosphate + phosphate + H(+). In terms of biological role, catalyzes the dephosphorylation of undecaprenyl diphosphate (UPP). Confers resistance to bacitracin. This is Undecaprenyl-diphosphatase 2 from Shouchella clausii (strain KSM-K16) (Alkalihalobacillus clausii).